The primary structure comprises 545 residues: uncharacterized protein (545 aa).

The span at 1 to 10 shows a compositional bias: basic residues; the sequence is MSRYRFRKAR. The segment at 1–25 is disordered; the sequence is MSRYRFRKARSNWPMGQNDSRWEPP. 2 WD repeats span residues 417 to 456 and 460 to 501; these read ACNT…NPMM and GHSN…MLCS.

This is an uncharacterized protein from Caenorhabditis elegans.